A 468-amino-acid polypeptide reads, in one-letter code: ATP synthase subunit beta (468 aa).

155–162 contributes to the ATP binding site; the sequence is GGAGVGKT.

This sequence belongs to the ATPase alpha/beta chains family. As to quaternary structure, F-type ATPases have 2 components, CF(1) - the catalytic core - and CF(0) - the membrane proton channel. CF(1) has five subunits: alpha(3), beta(3), gamma(1), delta(1), epsilon(1). CF(0) has three main subunits: a(1), b(2) and c(9-12). The alpha and beta chains form an alternating ring which encloses part of the gamma chain. CF(1) is attached to CF(0) by a central stalk formed by the gamma and epsilon chains, while a peripheral stalk is formed by the delta and b chains.

Its subcellular location is the cell membrane. It carries out the reaction ATP + H2O + 4 H(+)(in) = ADP + phosphate + 5 H(+)(out). Functionally, produces ATP from ADP in the presence of a proton gradient across the membrane. The catalytic sites are hosted primarily by the beta subunits. The chain is ATP synthase subunit beta from Streptococcus pyogenes serotype M5 (strain Manfredo).